A 462-amino-acid chain; its full sequence is MKLSFSLPSKSKPKVTATTADGNNAVDDGTSKEFVTEFDPSKTLANSIPKYVIPPIENTWRPHKKMKNLDLPLQSGNAGSGLEFEPEVPLPGTEKPDNISYGLNLRQKVKDDSIGGDAVEERKVSMGEQLMLQSLRRDLMSLADDPTLEDFESVPVDGFGAALMAGYGWKPGKGIGKNAKEDVEIKEYKKWTAKEGLGFDPDRSKVVDVKAKVKESVKLDKKGVGINGGDVFFVGKEVRIIAGRDVGLKGKIVEKPGSDFFVIKISGSEEEVKVGVNEVADLGSKEEEKCLKKLKDLQLNDREKDKKTSGRGRGAERGSRSEVRASEKQDRGQTRERKVKPSWLRSHIKVRIVSKDWKGGRLYLKKGKVVDVVGPTTCDITMDETQELVQGVDQELLETALPRRGGPVLVLSGKHKGVYGNLVEKDLDKETGVVRDLDNHKMLDVRLDQVAEYMGDMDDIEY.

Low complexity predominate over residues 1-10 (MKLSFSLPSK). A disordered region spans residues 1-32 (MKLSFSLPSKSKPKVTATTADGNNAVDDGTSK). One can recognise a G-patch domain in the interval 156-202 (VDGFGAALMAGYGWKPGKGIGKNAKEDVEIKEYKKWTAKEGLGFDPD). A KOW 1 domain is found at 231 to 258 (VFFVGKEVRIIAGRDVGLKGKIVEKPGS). Basic and acidic residues predominate over residues 301-336 (DREKDKKTSGRGRGAERGSRSEVRASEKQDRGQTRE). The tract at residues 301-340 (DREKDKKTSGRGRGAERGSRSEVRASEKQDRGQTRERKVK) is disordered. The 28-residue stretch at 401–428 (LPRRGGPVLVLSGKHKGVYGNLVEKDLD) folds into the KOW 2 domain.

This sequence belongs to the MOS2 family.

It localises to the nucleus. Its function is as follows. Required for innate and induced resistance to pathogens such as compatible and incompatible isolates of P.syringae and P.parasitica. The chain is Protein MOS2 (MOS2) from Arabidopsis thaliana (Mouse-ear cress).